A 475-amino-acid polypeptide reads, in one-letter code: Dihydrolipoyl dehydrogenase (475 aa).

Residues 36-45 (ERYSTLGGVC), Lys54, and Gly117 contribute to the FAD site. The cysteines at positions 45 and 50 are disulfide-linked. NAD(+) contacts are provided by residues 182–186 (GGGII), Glu205, Val238, and 270–273 (AIGR). Asp313 and Ala321 together coordinate FAD. Catalysis depends on His445, which acts as the Proton acceptor.

It belongs to the class-I pyridine nucleotide-disulfide oxidoreductase family. FAD is required as a cofactor.

Its subcellular location is the cytoplasm. The enzyme catalyses N(6)-[(R)-dihydrolipoyl]-L-lysyl-[protein] + NAD(+) = N(6)-[(R)-lipoyl]-L-lysyl-[protein] + NADH + H(+). The branched-chain alpha-keto dehydrogenase complex catalyzes the overall conversion of alpha-keto acids to acyl-CoA and CO(2). It contains multiple copies of 3 enzymatic components: branched-chain alpha-keto acid decarboxylase (E1), lipoamide acyltransferase (E2) and lipoamide dehydrogenase (E3). The chain is Dihydrolipoyl dehydrogenase (lpd) from Vibrio parahaemolyticus serotype O3:K6 (strain RIMD 2210633).